Reading from the N-terminus, the 142-residue chain is Large ribosomal subunit protein uL13 (142 aa).

It belongs to the universal ribosomal protein uL13 family. Part of the 50S ribosomal subunit.

In terms of biological role, this protein is one of the early assembly proteins of the 50S ribosomal subunit, although it is not seen to bind rRNA by itself. It is important during the early stages of 50S assembly. In Pasteurella multocida (strain Pm70), this protein is Large ribosomal subunit protein uL13.